The primary structure comprises 517 residues: Mitochondrial division protein fszA (517 aa).

Residues 60 to 64 (GGGCN), 147 to 149 (GTG), glutamate 178, arginine 182, and aspartate 225 each bind GTP. Residues 496-517 (FTNGNNNKPYNNNKNTPGSNYE) are disordered. Low complexity predominate over residues 497 to 517 (TNGNNNKPYNNNKNTPGSNYE).

The protein belongs to the FtsZ family.

Its subcellular location is the mitochondrion matrix. Its function is as follows. Probably involved in mitochondrion division process. When overexpressed, induces mitochondrial tubule formation. Binds to and hydrolyzes GTP. This Dictyostelium discoideum (Social amoeba) protein is Mitochondrial division protein fszA (fszA).